We begin with the raw amino-acid sequence, 121 residues long: C-X-C motif chemokine 11-6 (121 aa).

The signal sequence occupies residues 1–20; sequence MKTLAAFLLLSCLIAGEVNG. Intrachain disulfides connect Cys-29–Cys-56 and Cys-31–Cys-73. A disordered region spans residues 95–121; that stretch reads QSVPHSTTTGTVKSSMTSSTSAPTAFK. Residues 100–115 are compositionally biased toward low complexity; it reads STTTGTVKSSMTSSTS.

Belongs to the intercrine alpha (chemokine CxC) family.

The protein localises to the secreted. Its function is as follows. Ligand for cxcr3.2. Chemotactic for macrophages. The polypeptide is C-X-C motif chemokine 11-6 (Danio rerio (Zebrafish)).